We begin with the raw amino-acid sequence, 485 residues long: T-complex protein 1 subunit theta (485 aa).

Belongs to the TCP-1 chaperonin family. Component of the T-complex protein 1 (TCP1) complex.

It is found in the cytoplasm. Functionally, molecular chaperone; assists the folding of proteins upon ATP hydrolysis. The protein is T-complex protein 1 subunit theta (CCT8) of Encephalitozoon cuniculi (strain GB-M1) (Microsporidian parasite).